The following is a 496-amino-acid chain: Probable E3 ubiquitin-protein ligase XBOS32 (496 aa).

ANK repeat units follow at residues 50–79 (GRNS…EINL), 83–112 (RGQT…NVHR), 117–147 (NGGS…SMPN), 180–209 (GGLT…SVIE), and 223–252 (AGST…SLSA). Residues 321 to 368 (CAVCLEGSCSVAAEGCKHEFCTRCALYLCSTSYTSVSPAGAIPCPLCR) form an RING-type zinc finger.

The enzyme catalyses S-ubiquitinyl-[E2 ubiquitin-conjugating enzyme]-L-cysteine + [acceptor protein]-L-lysine = [E2 ubiquitin-conjugating enzyme]-L-cysteine + N(6)-ubiquitinyl-[acceptor protein]-L-lysine.. Its pathway is protein modification; protein ubiquitination. The sequence is that of Probable E3 ubiquitin-protein ligase XBOS32 (XBOS32) from Oryza sativa subsp. japonica (Rice).